The sequence spans 498 residues: ATP synthase subunit beta, chloroplastic (498 aa).

Position 172–179 (Gly172–Thr179) interacts with ATP.

This sequence belongs to the ATPase alpha/beta chains family. In terms of assembly, F-type ATPases have 2 components, CF(1) - the catalytic core - and CF(0) - the membrane proton channel. CF(1) has five subunits: alpha(3), beta(3), gamma(1), delta(1), epsilon(1). CF(0) has four main subunits: a(1), b(1), b'(1) and c(9-12).

The protein localises to the plastid. It is found in the chloroplast thylakoid membrane. It catalyses the reaction ATP + H2O + 4 H(+)(in) = ADP + phosphate + 5 H(+)(out). Its function is as follows. Produces ATP from ADP in the presence of a proton gradient across the membrane. The catalytic sites are hosted primarily by the beta subunits. The protein is ATP synthase subunit beta, chloroplastic of Idiospermum australiense (Ribbonwood tree).